The chain runs to 121 residues: UPF0102 protein Syncc9902_1284 (121 aa).

Belongs to the UPF0102 family.

The sequence is that of UPF0102 protein Syncc9902_1284 from Synechococcus sp. (strain CC9902).